A 181-amino-acid chain; its full sequence is Inner membrane-spanning protein YciB (181 aa).

5 helical membrane passes run 3-23 (LLFDFFPIVLFFIVYKFFGIY), 54-74 (SLAIIMVLGGATLFFQNPWFI), 81-101 (IYWLSALVFYGSGYIGSKPLI), 119-139 (LNLAWTLFFIVMGALNLYVAY), and 149-169 (FKLFGGVGFTLLFVLIQAFYL).

The protein belongs to the YciB family.

It is found in the cell inner membrane. In terms of biological role, plays a role in cell envelope biogenesis, maintenance of cell envelope integrity and membrane homeostasis. The protein is Inner membrane-spanning protein YciB of Legionella pneumophila (strain Corby).